Consider the following 598-residue polypeptide: Centrosomal protein of 70 kDa (598 aa).

Over residues 16 to 38 (DSTKEPLSTVTSQAQDSSLSANR) the composition is skewed to polar residues. The interval 16–43 (DSTKEPLSTVTSQAQDSSLSANRPVTEK) is disordered. 2 coiled-coil regions span residues 99 to 210 (TRQQ…EEDR) and 255 to 317 (TYKG…NIKL). The stretch at 484–517 (NGVYPRMNEVYARLGEMNNAVRNLQELLGLDSSS) is one TPR repeat.

Directly interacts with tubulin-gamma; this interaction determines centrosomal localization.

The protein resides in the cytoplasm. Its subcellular location is the cytoskeleton. It is found in the microtubule organizing center. The protein localises to the centrosome. In terms of biological role, plays a role in the organization of both preexisting and nascent microtubules in interphase cells. During mitosis, required for the organization and orientation of the mitotic spindle. The polypeptide is Centrosomal protein of 70 kDa (Cep70) (Rattus norvegicus (Rat)).